The following is a 196-amino-acid chain: DnaA initiator-associating protein DiaA (196 aa).

The SIS domain maps to 34–196 (LVHSLLNGNK…DNTLFPHQDD (163 aa)).

Belongs to the SIS family. DiaA subfamily. As to quaternary structure, homotetramer; dimer of dimers.

Its function is as follows. Required for the timely initiation of chromosomal replication via direct interactions with the DnaA initiator protein. The polypeptide is DnaA initiator-associating protein DiaA (Citrobacter koseri (strain ATCC BAA-895 / CDC 4225-83 / SGSC4696)).